A 1938-amino-acid polypeptide reads, in one-letter code: Histone-lysine N-methyltransferase SETD1B (1938 aa).

Over residues 1 to 20 (MSFKEAKPGERGKNPEDHGR) the composition is skewed to basic and acidic residues. Residues 1 to 44 (MSFKEAKPGERGKNPEDHGRKQAASWMNGMEAANQPSTSAEKKS) form a disordered region. One can recognise an RRM domain in the interval 111–199 (DEFYVGPVPP…NIIHAELDTK (89 aa)). Disordered stretches follow at residues 226–357 (LDAS…ENTF), 369–484 (FPRT…TRIA), 496–630 (LISS…EVTP), 652–688 (GFPPLPPPPPPQSGFPMPPPLPPPPPPTHPSVTVPPP), 916–1125 (KEPP…SSPV), 1147–1174 (HQTAQDTSHLRKKDLDVPLVESKEHKQD), 1187–1206 (MQQNVFKEHEKAPSPMNEEE), 1327–1373 (KTLS…GNSL), 1413–1468 (FPES…VPHM), 1496–1528 (ECEFTKGQLPSTDESAPSPPFPPTDKRKGPKKP), and 1744–1772 (DEPPIDTQGKSIPAQPQASTRAGSERRSE). 4 stretches are compositionally biased toward polar residues: residues 254–290 (VTPNSSTPFSHDTAYSSSRQGTPNSYSQFTPQSQGTP), 298–312 (PFSQDSSYSSRQTTP), 375–407 (LSHSSGNNKSAFSPYQGSTVFPQTDDNQYPQTS), and 446–457 (DSTTEQKASFAQ). The span at 512 to 531 (SPISSSSSQLSPIPPYSSSS) shows a compositional bias: low complexity. 2 stretches are compositionally biased toward polar residues: residues 532–546 (HYQDVTPSSRPSSTG) and 569–585 (SLCQNSRSASPIDQINQ). Over residues 588 to 599 (RKMETLDNKELV) the composition is skewed to basic and acidic residues. A compositionally biased stretch (acidic residues) spans 619–628 (EDMEISDDEV). Composition is skewed to acidic residues over residues 976–990 (SEGEEEVESEGDDGE) and 1054–1114 (DSSD…EDFF). The segment covering 1159–1174 (KDLDVPLVESKEHKQD) has biased composition (basic and acidic residues). The span at 1329–1343 (LSEEELPRTPGRDIL) shows a compositional bias: basic and acidic residues. Composition is skewed to polar residues over residues 1349-1358 (LGKSQSTETI) and 1441-1453 (EPTSASLTMNSVP). Over residues 1454-1464 (SPIPFASPPRG) the composition is skewed to pro residues. Residues 1751–1765 (QGKSIPAQPQASTRA) are compositionally biased toward polar residues. The short motif at 1770–1775 (RSEQRR) is the RxxxRR motif element. The region spanning 1799-1916 (KKIRFCKSHI…VNEEITYDYK (118 aa)) is the SET domain. Tyr1915 is an S-adenosyl-L-methionine binding site. The Post-SET domain occupies 1922–1938 (VKIPCLCGAENCRGTLN).

The protein belongs to the class V-like SAM-binding methyltransferase superfamily. In terms of assembly, component of the SET1B/COMPASS complex.

Its subcellular location is the nucleus speckle. It localises to the chromosome. The enzyme catalyses L-lysyl(4)-[histone H3] + 3 S-adenosyl-L-methionine = N(6),N(6),N(6)-trimethyl-L-lysyl(4)-[histone H3] + 3 S-adenosyl-L-homocysteine + 3 H(+). Its function is as follows. Histone methyltransferase that specifically methylates 'Lys-4' of histone H3, when part of the SET1 histone methyltransferase (HMT) complex, but not if the neighboring 'Lys-9' residue is already methylated. H3 'Lys-4' methylation represents a specific tag for epigenetic transcriptional activation. This is Histone-lysine N-methyltransferase SETD1B (setd1b) from Xenopus laevis (African clawed frog).